A 453-amino-acid polypeptide reads, in one-letter code: Mogroside IIIx synthase (453 aa).

H21 serves as the catalytic Proton acceptor. The active-site Charge relay is the D122. The UDP-alpha-D-glucose site is built by S273, Q336, W354, N355, S356, E359, D375, and Q376.

This sequence belongs to the UDP-glycosyltransferase family. Highly expressed in mature fruits.

The catalysed reaction is mogroside IIE + UDP-alpha-D-glucose = mogroside IIIX + UDP + H(+). The enzyme catalyses mogroside III + UDP-alpha-D-glucose = mogroside IV + UDP + H(+). It carries out the reaction mogroside III + UDP-alpha-D-glucose = siamenoside I + UDP + H(+). It catalyses the reaction mogroside IV + UDP-alpha-D-glucose = mogroside V + UDP + H(+). Its pathway is secondary metabolite biosynthesis; terpenoid biosynthesis. Its function is as follows. UDP-glycosyltransferase involved in the biosynthesis of cucurbitacin and mogroside tetracyclic triterpene natural products (e.g. siamenoside I and mogrosides IV, V and VI). Cucurbitacins have cytotoxic properties and exhibit deterrent taste as a defense barrier against herbivores. Mogrosides are nonsugar highly oxygenated compounds used as high-intensity zero-calorie sweeteners; they also possess pharmacological properties such as regulating immunity, lowering blood sugar and lipid levels, protecting the liver, and acting as antioxidants and antitumor agents. Catalyzes the branched glucosylations of mogroside II-E, mogroside III and mogroside IV. This chain is Mogroside IIIx synthase, found in Siraitia grosvenorii (Monk's fruit).